Reading from the N-terminus, the 299-residue chain is Recombination-associated protein RdgC (299 aa).

The protein belongs to the RdgC family.

Its subcellular location is the cytoplasm. It is found in the nucleoid. Functionally, may be involved in recombination. In Bordetella bronchiseptica (strain ATCC BAA-588 / NCTC 13252 / RB50) (Alcaligenes bronchisepticus), this protein is Recombination-associated protein RdgC.